A 134-amino-acid polypeptide reads, in one-letter code: MAEESSKAVKYYTLEEIQKHNNSKSTWLILHYKVYDLTKFLEEHPGGEEVLREQAGGDATENFEDVGHSTDARELSKTFIIGELHPDDRSKITKPSESIITTIDSNPSWWTNWLIPAISALFVALIYHLYTSEN.

Ala2 carries the N-acetylalanine modification. Residues Lys7, Lys10, and Lys19 each carry the N6-acetyllysine modification. In terms of domain architecture, Cytochrome b5 heme-binding spans 9-85 (VKYYTLEEIQ…SKTFIIGELH (77 aa)). Residues His44 and His68 each coordinate heme. Residues 109 to 131 (WWTNWLIPAISALFVALIYHLYT) traverse the membrane as a helical segment.

This sequence belongs to the cytochrome b5 family.

It localises to the endoplasmic reticulum membrane. The protein localises to the microsome membrane. Cytochrome b5 is a membrane-bound hemoprotein functioning as an electron carrier for several membrane-bound oxygenases. The protein is Cytochrome b5 (CYB5A) of Bos taurus (Bovine).